The chain runs to 139 residues: Single-stranded DNA-binding protein 2 (139 aa).

The SSB domain maps to 1–104 (MLNRTVLVGR…VVADSVQFLE (104 aa)). Positions 103 to 139 (LEPKNNNKQNNQQHNGQTQTGNNPFDNTEEDFSDLPF) are disordered. Residues 106–125 (KNNNKQNNQQHNGQTQTGNN) show a composition bias toward low complexity. The segment covering 129-139 (NTEEDFSDLPF) has biased composition (acidic residues).

In terms of assembly, homotetramer.

The sequence is that of Single-stranded DNA-binding protein 2 (ssb-p) from Staphylococcus aureus (strain COL).